The primary structure comprises 196 residues: Deoxyribose-phosphate aldolase (196 aa).

D91 serves as the catalytic Proton donor/acceptor. K153 (schiff-base intermediate with acetaldehyde) is an active-site residue. The active-site Proton donor/acceptor is the K182.

This sequence belongs to the DeoC/FbaB aldolase family. DeoC type 1 subfamily.

Its subcellular location is the cytoplasm. It carries out the reaction 2-deoxy-D-ribose 5-phosphate = D-glyceraldehyde 3-phosphate + acetaldehyde. Its pathway is carbohydrate degradation; 2-deoxy-D-ribose 1-phosphate degradation; D-glyceraldehyde 3-phosphate and acetaldehyde from 2-deoxy-alpha-D-ribose 1-phosphate: step 2/2. Its function is as follows. Catalyzes a reversible aldol reaction between acetaldehyde and D-glyceraldehyde 3-phosphate to generate 2-deoxy-D-ribose 5-phosphate. The sequence is that of Deoxyribose-phosphate aldolase from Mycoplasma mycoides subsp. mycoides SC (strain CCUG 32753 / NCTC 10114 / PG1).